The following is a 1154-amino-acid chain: MFSGQGSQYVGMGRALYESEPTFRHHVDRFDEVTRDKTGTSLVARLYGRDARAGEPFDDTHVTHPALFAVQYALARTLQARGAQPDIVLGSSLGDFVAAALAQVAPAQEIVAWLIDQAASMARACEPGFMLAVLGPASIYRGSDTLREFSDLVGVNYAEHFVIGGNRADLVRVEAALAREGVVFHRLPVRFGFHSRNVAPVVPWLHAREANLSCRAPTIPWASCTAGGIVEAPTARFLTRIAIDPLRFQEAARAIEQTGSPDTLHWVDLGPSGTLANFARRLGVPNDRLHVVMGPFGDDARALGRVSNLHASNARPAGAPAAPVSEGVSMHAFLFPGQGSQVKGMGAALFARFPDRMRLANEILGYDLAALCIENPDNRLGQTQFTQPAMYVVNALAYLARREDDAGAPAFVAGHSLGEYSALFAAGAFSFEDGLRLVKKRGELMSAARDGGMAAVLGLDEARVAEILALSDLRGIDIANLNAPTQIVIAGPADEIRRAQQWFEQGGCYAYVVLPVSGAFHSRMMRDAQREFERFIAPFDIGAPGIPVIANVTGRPYRGDEVRRGLVEQIASPVRWVDTIRYLSEQGVERFAEIGTGTVLTDLLRKILPQKAGASGAAARPQAGAASAVAASAPPRPTGMADAQPPAASPARAATAASTMPPASASASASAPAPAPAPAPAPAPAPAPAPALAPAFARAPASTSTNGIAPAARVEQLGCPEFKRRFGLKYAYVAGGMVHGIASVRMVVAMAKAGMKGYFGTGGLSLDAIRDAVRAIRGALPAGEPYGMNLLSGRLEEATVDLYLREGVTSVEAAAYMHVTPALARFKLAGLSVDRDGATVSAHKILAKVSRPEVATAFMSPIPEKFLERFVRDGVISDAQARAARAMPVADAVCVEADSGGHTDMGAMPALLPAIRRLCADIAGERGYRDKVPVGVAGGIGTPEAAAAAFVLGADFILTGSINQCTVESGISDVVKDMLQQINVHDTDYAPAGDMFELGAKVQVLRRGVFFPARANRLYELYKQYDSVDDLPDAVRRQLEDKYFGKSLAEVYADCERYYPADEIERARGNPKQKLALIFRWYFGFATRAALAGNEADKVNFQVQCGPALGAFNQWVRNTALENWRNRHVAEMAARILQDAADLLSRRYLSMVGR.

The acyl transferase stretch occupies residues 330–714 (MHAFLFPGQG…TNGIAPAARV (385 aa)). The interval 627–689 (SAVAASAPPR…PAPAPAPAPA (63 aa)) is disordered. Residues 641-672 (ADAQPPAASPARAATAASTMPPASASASASAP) show a composition bias toward low complexity. Residues 673-689 (APAPAPAPAPAPAPAPA) show a composition bias toward pro residues.

This sequence in the N-terminal section; belongs to the FabD family.

The protein localises to the cytoplasm. The enzyme catalyses holo-[ACP] + malonyl-CoA = malonyl-[ACP] + CoA. It participates in antibiotic biosynthesis. Functionally, involved in production of the polyketide antibiotic thailandamide. Probably has an acyl transferase activity and could also have a flavin mononucleotide-dependent oxidoreductase activity. The sequence is that of Polyketide biosynthesis protein ThaF from Burkholderia thailandensis (strain ATCC 700388 / DSM 13276 / CCUG 48851 / CIP 106301 / E264).